Reading from the N-terminus, the 302-residue chain is 4-hydroxy-tetrahydrodipicolinate synthase (302 aa).

Pyruvate is bound at residue Thr44. Tyr132 (proton donor/acceptor) is an active-site residue. Catalysis depends on Lys160, which acts as the Schiff-base intermediate with substrate. Val202 serves as a coordination point for pyruvate.

It belongs to the DapA family. As to quaternary structure, homotetramer; dimer of dimers.

The protein localises to the cytoplasm. The enzyme catalyses L-aspartate 4-semialdehyde + pyruvate = (2S,4S)-4-hydroxy-2,3,4,5-tetrahydrodipicolinate + H2O + H(+). Its pathway is amino-acid biosynthesis; L-lysine biosynthesis via DAP pathway; (S)-tetrahydrodipicolinate from L-aspartate: step 3/4. Functionally, catalyzes the condensation of (S)-aspartate-beta-semialdehyde [(S)-ASA] and pyruvate to 4-hydroxy-tetrahydrodipicolinate (HTPA). This Thermomicrobium roseum (strain ATCC 27502 / DSM 5159 / P-2) protein is 4-hydroxy-tetrahydrodipicolinate synthase.